A 741-amino-acid polypeptide reads, in one-letter code: Protein O-mannosyl-transferase TMTC4 (741 aa).

The Cytoplasmic portion of the chain corresponds to 1-10 (MVELDADLDH). The helical transmembrane segment at 11 to 31 (IVPSVLPPFWAKLVVGFVSLL) threads the bilayer. Residues 32–110 (CFARSYDGDF…FHPVGFHVVN (79 aa)) lie on the Extracellular side of the membrane. Residue asparagine 77 is glycosylated (N-linked (GlcNAc...) asparagine). Residues 111-131 (ILLHGSISILMLDVFSVLFGG) traverse the membrane as a helical segment. The Cytoplasmic segment spans residues 132–146 (LQYTGKGQRVHLAPR). 2 consecutive transmembrane segments (helical) span residues 147-166 (ASLLATLLFAVHPVHTECVA) and 167-185 (GVVGRADLLCALFFLLSFL). Residues 186–198 (GYCQAFKETGNKE) are Cytoplasmic-facing. A helical membrane pass occupies residues 199-219 (GTHSSTFWVLLSIFLGAVAML). Topologically, residues 220–224 (CKEQG) are extracellular. Residues 225–245 (ITVLGLNAVFDILVIGKLDIL) traverse the membrane as a helical segment. At 246–265 (AAVRKVLHKDKSQENAGMFK) the chain is on the cytoplasmic side. Residues 266–286 (NGGLLFRIALLTIGGTSMLYI) traverse the membrane as a helical segment. The Extracellular portion of the chain corresponds to 287–354 (RWKIMGTGPP…PLIKSVGDWR (68 aa)). Residues 355 to 375 (VIALAALWLCLIGLIFQALCS) traverse the membrane as a helical segment. Over 376-382 (EDSCKRR) the chain is Cytoplasmic. The helical transmembrane segment at 383 to 403 (ILTLGLGFLVIPFLPASNLFF) threads the bilayer. Residues 404–412 (RVGFVVAER) are Extracellular-facing. The helical transmembrane segment at 413–433 (VLYLPSAGYCVLLTFGFGALS) threads the bilayer. Over 434–441 (RHTKKKKP) the chain is Cytoplasmic. Residues 442 to 462 (VAAIILGILLINALRCVIRSG) traverse the membrane as a helical segment. Over 463–741 (EWRSEEQLFR…KLEQTQKKDV (279 aa)) the chain is Extracellular. TPR repeat units follow at residues 482–515 (AKVHYNIGKNLADQGNQTAAIKYYREAVRLNPKY), 516–549 (VHAMNNLGNILKERNELQEAEELLSLAVQIQPDF), 550–583 (AAAWMNLGIVQNSLKRFEEAEQSYRTAIKHRRKY), 584–617 (PDCYYNLGRLYADLNRHVDALNAWRNATVLKPEH), 618–651 (SLAWNNMIILLDNTGNLAQAEAVGREALQLIPND), 652–685 (HSLMFSLANVLGKSQKYKESEALFLKAIKANPNV), and 686–719 (ASYHGNLAVLYHRWGHLDSAKKHYEISLQLDPVA). Asparagine 497 carries an N-linked (GlcNAc...) asparagine glycan. Asparagine 609 is a glycosylation site (N-linked (GlcNAc...) asparagine). A glycan (N-linked (GlcNAc...) asparagine) is linked at asparagine 725.

It belongs to the TMTC family.

The protein resides in the membrane. It localises to the endoplasmic reticulum. It carries out the reaction a di-trans,poly-cis-dolichyl beta-D-mannosyl phosphate + L-seryl-[protein] = 3-O-(alpha-D-mannosyl)-L-seryl-[protein] + a di-trans,poly-cis-dolichyl phosphate + H(+). The catalysed reaction is a di-trans,poly-cis-dolichyl beta-D-mannosyl phosphate + L-threonyl-[protein] = 3-O-(alpha-D-mannosyl)-L-threonyl-[protein] + a di-trans,poly-cis-dolichyl phosphate + H(+). It participates in protein modification; protein glycosylation. Transfers mannosyl residues to the hydroxyl group of serine or threonine residues. The 4 members of the TMTC family are O-mannosyl-transferases dedicated primarily to the cadherin superfamily, each member seems to have a distinct role in decorating the cadherin domains with O-linked mannose glycans at specific regions. Also acts as O-mannosyl-transferase on other proteins such as PDIA3. The protein is Protein O-mannosyl-transferase TMTC4 of Mus musculus (Mouse).